We begin with the raw amino-acid sequence, 296 residues long: Nucleotide-binding protein SUB0630 (296 aa).

13 to 20 is a binding site for ATP; it reads GMSGAGKT. 63–66 provides a ligand contact to GTP; the sequence is DMRS.

Belongs to the RapZ-like family.

In terms of biological role, displays ATPase and GTPase activities. The protein is Nucleotide-binding protein SUB0630 of Streptococcus uberis (strain ATCC BAA-854 / 0140J).